The following is a 220-amino-acid chain: MPGLTIGDTVPNLELDSTHGKIRIHDFVGDTYVILFSHPGDFTPVCTTELAAMAGYAKEFDKRGVKLLGISCDDVQSHKDWIKDIEAYKPGNRVTYPIMADPSREAIKQLNMVDPDEKDSNGGHLPSRALHIVGPDKKVKLSFLYPACVGRNMDEVVRAVDALQTAAKHAVATPVNWKPGERVVIPPGVSDDEAKEKFPQGFDTADLPSGKGYLRFTKVG.

The 162-residue stretch at 4–165 (LTIGDTVPNL…VVRAVDALQT (162 aa)) folds into the Thioredoxin domain. Cysteine 46 functions as the Cysteine sulfenic acid (-SOH) intermediate in the catalytic mechanism. A Bipartite nuclear localization signal motif is present at residues 195-218 (KEKFPQGFDTADLPSGKGYLRFTK).

The protein belongs to the peroxiredoxin family. Prx6 subfamily.

It localises to the nucleus. Its subcellular location is the cytoplasm. It catalyses the reaction a hydroperoxide + [thioredoxin]-dithiol = an alcohol + [thioredoxin]-disulfide + H2O. Functionally, thiol-specific peroxidase that catalyzes the reduction of hydrogen peroxide and organic hydroperoxides to water and alcohols, respectively. Seems to contribute to the inhibition of germination during stress. This Oryza sativa subsp. japonica (Rice) protein is 1-Cys peroxiredoxin A.